The chain runs to 204 residues: MSFDNYLVPTVIEQSGRGERAFDIYSRLLKERIVFLVGPVTDESANLVVAQLLFLESENPDKDIFFYINSPGGSVTAGMSIYDTMNFIKPDVSTLCLGQAASMGAFLLSAGEKGKRFALPNSRIMIHQPLISGGLGGQASDIEIHARELLKIKEKLNRLMAKHCGRDLADLERDTDRDNFMSAEEAKEYGLIDQVLENRASLQL.

The Nucleophile role is filled by Ser-102. Residue His-127 is part of the active site.

The protein belongs to the peptidase S14 family. As to quaternary structure, fourteen ClpP subunits assemble into 2 heptameric rings which stack back to back to give a disk-like structure with a central cavity, resembling the structure of eukaryotic proteasomes.

It localises to the cytoplasm. It catalyses the reaction Hydrolysis of proteins to small peptides in the presence of ATP and magnesium. alpha-casein is the usual test substrate. In the absence of ATP, only oligopeptides shorter than five residues are hydrolyzed (such as succinyl-Leu-Tyr-|-NHMec, and Leu-Tyr-Leu-|-Tyr-Trp, in which cleavage of the -Tyr-|-Leu- and -Tyr-|-Trp bonds also occurs).. Cleaves peptides in various proteins in a process that requires ATP hydrolysis. Has a chymotrypsin-like activity. Plays a major role in the degradation of misfolded proteins. The protein is ATP-dependent Clp protease proteolytic subunit of Neisseria meningitidis serogroup A / serotype 4A (strain DSM 15465 / Z2491).